The primary structure comprises 114 residues: Large ribosomal subunit protein bL19 (114 aa).

This sequence belongs to the bacterial ribosomal protein bL19 family.

In terms of biological role, this protein is located at the 30S-50S ribosomal subunit interface and may play a role in the structure and function of the aminoacyl-tRNA binding site. This chain is Large ribosomal subunit protein bL19, found in Acidithiobacillus ferrooxidans (strain ATCC 23270 / DSM 14882 / CIP 104768 / NCIMB 8455) (Ferrobacillus ferrooxidans (strain ATCC 23270)).